The following is a 473-amino-acid chain: Ribulose bisphosphate carboxylase large chain (473 aa).

Residues asparagine 116 and threonine 166 each contribute to the substrate site. The Proton acceptor role is filled by lysine 168. Position 170 (lysine 170) interacts with substrate. Mg(2+) contacts are provided by lysine 194, aspartate 196, and glutamate 197. An N6-carboxylysine modification is found at lysine 194. Histidine 287 functions as the Proton acceptor in the catalytic mechanism. Arginine 288, histidine 320, and serine 372 together coordinate substrate.

It belongs to the RuBisCO large chain family. Type I subfamily. Heterohexadecamer of 8 large chains and 8 small chains. It depends on Mg(2+) as a cofactor.

The enzyme catalyses 2 (2R)-3-phosphoglycerate + 2 H(+) = D-ribulose 1,5-bisphosphate + CO2 + H2O. It carries out the reaction D-ribulose 1,5-bisphosphate + O2 = 2-phosphoglycolate + (2R)-3-phosphoglycerate + 2 H(+). In terms of biological role, ruBisCO catalyzes two reactions: the carboxylation of D-ribulose 1,5-bisphosphate, the primary event in carbon dioxide fixation, as well as the oxidative fragmentation of the pentose substrate. Both reactions occur simultaneously and in competition at the same active site. The polypeptide is Ribulose bisphosphate carboxylase large chain (Nitrobacter winogradskyi (Nitrobacter agilis)).